A 515-amino-acid chain; its full sequence is NAD(P)H-quinone oxidoreductase subunit 2 (515 aa).

14 helical membrane-spanning segments follow: residues 14-34 (TILP…ADLI), 42-62 (WTPY…IPLW), 79-99 (LSLF…LMSI), 109-128 (LGEF…FIAG), 132-151 (LVFI…LLTG), 167-187 (LLIG…LYGL), 206-226 (LGLV…ISAV), 240-260 (PTPV…ALAI), 274-294 (WQLI…VVAL), 302-322 (MLAY…VVGT), 330-350 (LFYL…VILF), 374-394 (LGLS…GFFG), 396-416 (IYLF…LGLL), and 462-482 (VGLV…NPLF).

The protein belongs to the complex I subunit 2 family. NDH-1 can be composed of about 15 different subunits; different subcomplexes with different compositions have been identified which probably have different functions.

It is found in the cellular thylakoid membrane. It catalyses the reaction a plastoquinone + NADH + (n+1) H(+)(in) = a plastoquinol + NAD(+) + n H(+)(out). The enzyme catalyses a plastoquinone + NADPH + (n+1) H(+)(in) = a plastoquinol + NADP(+) + n H(+)(out). Functionally, NDH-1 shuttles electrons from an unknown electron donor, via FMN and iron-sulfur (Fe-S) centers, to quinones in the respiratory and/or the photosynthetic chain. The immediate electron acceptor for the enzyme in this species is believed to be plastoquinone. Couples the redox reaction to proton translocation, and thus conserves the redox energy in a proton gradient. Cyanobacterial NDH-1 also plays a role in inorganic carbon-concentration. This chain is NAD(P)H-quinone oxidoreductase subunit 2, found in Thermosynechococcus vestitus (strain NIES-2133 / IAM M-273 / BP-1).